A 214-amino-acid chain; its full sequence is Neuromodulin (214 aa).

A disordered region spans residues 1-214 (MLCCMRRTKQ…EEAKPDQENA (214 aa)). S-palmitoyl cysteine attachment occurs at residues Cys-3 and Cys-4. Basic and acidic residues-rich tracts occupy residues 9–33 (KQVE…DKAH), 52–88 (MKDD…KTEE), and 95–122 (LEVK…KDTP). Residues 32–61 (AHKAATKIQASFRGHIIRKKMKDDKKDDNS) enclose the IQ domain. Positions 124–133 (EENQASAESE) are enriched in low complexity. Composition is skewed to basic and acidic residues over residues 150 to 160 (QAKEESKKADV), 168 to 193 (ASEK…EIKA), and 205 to 214 (EEAKPDQENA).

It belongs to the neuromodulin family. As to quaternary structure, binds calmodulin with a greater affinity in the absence of Ca(2+) than in its presence. Palmitoylated. Palmitoylation is essential for plasma membrane association.

It localises to the cell membrane. Its subcellular location is the cell projection. The protein resides in the growth cone membrane. It is found in the synapse. The protein localises to the filopodium membrane. Its function is as follows. This protein is associated with nerve growth. It is a major component of the motile 'growth cones' that form the tips of elongating axons. Plays a role in axonal and dendritic filopodia induction. In Xenopus laevis (African clawed frog), this protein is Neuromodulin (gap43).